The chain runs to 316 residues: 4-hydroxy-3-methylbut-2-enyl diphosphate reductase (316 aa).

Residue C12 participates in [4Fe-4S] cluster binding. (2E)-4-hydroxy-3-methylbut-2-enyl diphosphate is bound by residues H41 and H74. The dimethylallyl diphosphate site is built by H41 and H74. Isopentenyl diphosphate-binding residues include H41 and H74. C96 is a [4Fe-4S] cluster binding site. H124 is a binding site for (2E)-4-hydroxy-3-methylbut-2-enyl diphosphate. Residue H124 coordinates dimethylallyl diphosphate. Isopentenyl diphosphate is bound at residue H124. Residue E126 is the Proton donor of the active site. A (2E)-4-hydroxy-3-methylbut-2-enyl diphosphate-binding site is contributed by T167. C197 lines the [4Fe-4S] cluster pocket. (2E)-4-hydroxy-3-methylbut-2-enyl diphosphate contacts are provided by S225, S226, N227, and S269. Dimethylallyl diphosphate is bound by residues S225, S226, N227, and S269. The isopentenyl diphosphate site is built by S225, S226, N227, and S269.

Belongs to the IspH family. In terms of assembly, homodimer. It depends on [4Fe-4S] cluster as a cofactor.

The catalysed reaction is isopentenyl diphosphate + 2 oxidized [2Fe-2S]-[ferredoxin] + H2O = (2E)-4-hydroxy-3-methylbut-2-enyl diphosphate + 2 reduced [2Fe-2S]-[ferredoxin] + 2 H(+). It catalyses the reaction dimethylallyl diphosphate + 2 oxidized [2Fe-2S]-[ferredoxin] + H2O = (2E)-4-hydroxy-3-methylbut-2-enyl diphosphate + 2 reduced [2Fe-2S]-[ferredoxin] + 2 H(+). The protein operates within isoprenoid biosynthesis; dimethylallyl diphosphate biosynthesis; dimethylallyl diphosphate from (2E)-4-hydroxy-3-methylbutenyl diphosphate: step 1/1. It functions in the pathway isoprenoid biosynthesis; isopentenyl diphosphate biosynthesis via DXP pathway; isopentenyl diphosphate from 1-deoxy-D-xylulose 5-phosphate: step 6/6. Its function is as follows. Catalyzes the conversion of 1-hydroxy-2-methyl-2-(E)-butenyl 4-diphosphate (HMBPP) into a mixture of isopentenyl diphosphate (IPP) and dimethylallyl diphosphate (DMAPP). Acts in the terminal step of the DOXP/MEP pathway for isoprenoid precursor biosynthesis. The chain is 4-hydroxy-3-methylbut-2-enyl diphosphate reductase from Klebsiella pneumoniae (strain 342).